The sequence spans 92 residues: RNA-binding protein Hfq (92 aa).

The region spanning 9 to 68 (DPFLNALRRERVPVSIYLVNGIKLQGQVESFDQFVILLKNTVSQMVYKHAISTVVPARPF) is the Sm domain. The interval 68–92 (FNVSSHHNTPNQAAGYNASHDDSAE) is disordered. A compositionally biased stretch (polar residues) spans 69–81 (NVSSHHNTPNQAA).

The protein belongs to the Hfq family. In terms of assembly, homohexamer.

Functionally, RNA chaperone that binds small regulatory RNA (sRNAs) and mRNAs to facilitate mRNA translational regulation in response to envelope stress, environmental stress and changes in metabolite concentrations. Also binds with high specificity to tRNAs. The protein is RNA-binding protein Hfq of Shewanella loihica (strain ATCC BAA-1088 / PV-4).